Here is a 339-residue protein sequence, read N- to C-terminus: uncharacterized protein (339 aa).

2 VOC domains span residues E2–E127 and T141–I276. Positions 144, 222, and 306 each coordinate Fe cation.

This sequence belongs to the 4HPPD family. Fe cation is required as a cofactor.

This is an uncharacterized protein from Synechocystis sp. (strain ATCC 27184 / PCC 6803 / Kazusa).